The following is a 295-amino-acid chain: Succinate dehydrogenase assembly factor 2, mitochondrial (295 aa).

3 disordered regions span residues 35–90 (AKDN…PELL), 208–227 (PEEGTPAEDTPTETWQRTGA), and 269–295 (TGFHAAKNKKTGGSGLGRMPNIQVFDS). Polar residues predominate over residues 45–75 (STPSTAPEYRQNQTSKPPNQFMPNSTSTMTN).

The protein belongs to the SDHAF2 family. Interacts with the flavoprotein subunit within the SDH catalytic dimer.

The protein resides in the mitochondrion matrix. Plays an essential role in the assembly of succinate dehydrogenase (SDH), an enzyme complex (also referred to as respiratory complex II) that is a component of both the tricarboxylic acid (TCA) cycle and the mitochondrial electron transport chain, and which couples the oxidation of succinate to fumarate with the reduction of ubiquinone (coenzyme Q) to ubiquinol. Required for flavinylation (covalent attachment of FAD) of the flavoprotein subunit of the SDH catalytic dimer. The polypeptide is Succinate dehydrogenase assembly factor 2, mitochondrial (Aspergillus terreus (strain NIH 2624 / FGSC A1156)).